A 145-amino-acid polypeptide reads, in one-letter code: Monooxygenase AacuP (145 aa).

Belongs to the avfA family.

Its pathway is secondary metabolite biosynthesis. Monooxygenase; part of the gene cluster that mediates the biosynthesis of the tetrahydroxanthone dimer secalonic acid D. The pathway begins with the synthesis of atrochrysone thioester by the polyketide synthase AacuL. The atrochrysone carboxyl ACP thioesterase AacuM then breaks the thioester bond and releases the atrochrysone carboxylic acid from AacuL. Atrochrysone carboxylic acid is decarboxylated by the decarboxylase AacuI, and oxidized by the anthrone oxygenase AacuG to yield emodin. Emodin is then reduced to emodin hydroquinone by a yet unidentified oxidoreductase. A-ring reduction by the short chain dehydrogenase AacuN, dehydration by the scytalone dehydratase-like protein AacuK and probable spontaneous re-oxidation, results in overall deoxygenation to chrysophanol. Baeyer-Villiger oxidation by the Baeyer-Villiger monooxygenase (BVMO) AacuH then yields monodictyphenone. Monodictyphenone is transformed into compounds with the tetrahydroxanthone skeleton via methylesterification by the methyltransferase AacuQ, followed by the action of the flavin-dependent monooxygenase AacuC, the isomerase AacuP, and the short chain dehydrogenase/reductase AacuF or AacuD. AacuF and AacuD should accept the same compound as a substrate but perform the ketoreduction with a different stereoselectivity, thus yielding blennolides B and A, respectively. In the final step of the biosynthesis, the cytochrome P450 monooxygenase AacuE accepts blennolide B and/or blennolide A to conduct the dimerization reaction to furnish the tetrahydroxanthone dimers, secalonic acids D, B, and F. The polypeptide is Monooxygenase AacuP (Aspergillus aculeatus (strain ATCC 16872 / CBS 172.66 / WB 5094)).